Here is a 547-residue protein sequence, read N- to C-terminus: Inositol-tetrakisphosphate 1-kinase 6 (547 aa).

K263 contributes to the 1D-myo-inositol 1,3,4-trisphosphate binding site. ATP is bound by residues R317 and K370. An ATP-grasp domain is found at 327 to 539 (LEGLSAEGRP…FWDAIKQSYE (213 aa)). Residues H381 and K415 each coordinate 1D-myo-inositol 1,3,4-trisphosphate. ATP is bound by residues 404-415 (QEYIDHGSKIFK), S430, and S450. Mg(2+)-binding residues include D497, D511, and N513. Residues N513 and S517 each contribute to the 1D-myo-inositol 1,3,4-trisphosphate site.

This sequence belongs to the ITPK1 family. In terms of assembly, monomer. It depends on Mg(2+) as a cofactor. As to expression, highly expressed in embryos and at lower levels in roots, leaves, flowers and anthers.

It carries out the reaction 1D-myo-inositol 3,4,5,6-tetrakisphosphate + ATP = 1D-myo-inositol 1,3,4,5,6-pentakisphosphate + ADP + H(+). The enzyme catalyses 1D-myo-inositol 1,3,4-trisphosphate + ATP = 1D-myo-inositol 1,3,4,5-tetrakisphosphate + ADP + H(+). It catalyses the reaction 1D-myo-inositol 1,3,4-trisphosphate + ATP = 1D-myo-inositol 1,3,4,6-tetrakisphosphate + ADP + H(+). In terms of biological role, kinase that can phosphorylate various inositol polyphosphate such as Ins(3,4,5,6)P4 or Ins(1,3,4)P3 and participates in phytic acid biosynthesis in developing seeds. Phytic acid is the primary storage form of phosphorus in cereal grains and other plant seeds. The sequence is that of Inositol-tetrakisphosphate 1-kinase 6 (ITPK6) from Oryza sativa subsp. japonica (Rice).